The following is a 629-amino-acid chain: DNA mismatch repair protein MutL (629 aa).

Belongs to the DNA mismatch repair MutL/HexB family.

Functionally, this protein is involved in the repair of mismatches in DNA. It is required for dam-dependent methyl-directed DNA mismatch repair. May act as a 'molecular matchmaker', a protein that promotes the formation of a stable complex between two or more DNA-binding proteins in an ATP-dependent manner without itself being part of a final effector complex. The protein is DNA mismatch repair protein MutL of Rhodospirillum rubrum (strain ATCC 11170 / ATH 1.1.1 / DSM 467 / LMG 4362 / NCIMB 8255 / S1).